The sequence spans 474 residues: Shugoshin-1 (474 aa).

Disordered regions lie at residues 1–53, 189–226, 322–356, and 422–442; these read MTST…KPNA, VESQSAVSSNTVCQEPPQDGKQKRMPQRRRSSRLNQGS, NSKQNHLTGSQSSLSFNTVDTPEPPEDNTVKRCSK, and VSMEQRTNQEQDGDCFSRKSN. Polar residues-rich tracts occupy residues 12 to 22 and 190 to 201; these read GSLNPPHSNPS and ESQSAVSSNTVC. Residues 211-220 show a composition bias toward basic residues; the sequence is KRMPQRRRSS. Polar residues-rich tracts occupy residues 322–341 and 422–431; these read NSKQNHLTGSQSSLSFNTVD and VSMEQRTNQE.

Belongs to the shugoshin family. As to expression, highly expressed in tissues containing meiocytes. Expressed at much lower level in leaves and pollen-containing flowers.

Its subcellular location is the nucleus. The protein localises to the chromosome. The protein resides in the centromere. Functionally, plays a central role in chromosome cohesion during meiosis I by preventing premature dissociation of cohesin complex from centromeres after prophase, when most of cohesin complex dissociates from chromosomes arms. Required for maintenance of centromeric cohesion before prophase II and correct segregation of chromatids during meiosis II. Has apparently no function in mitosis. In Zea mays (Maize), this protein is Shugoshin-1.